Here is a 414-residue protein sequence, read N- to C-terminus: Isocitrate dehydrogenase [NADP] cytoplasmic (414 aa).

S2 carries the N-acetylserine modification. At Y42 the chain carries Phosphotyrosine. Residue 75–77 (TIT) participates in NADP(+) binding. T77 is a binding site for substrate. The residue at position 81 (K81) is an N6-acetyllysine. Position 82 (R82) interacts with NADP(+). Substrate-binding positions include 94–100 (SPNGTIR) and R109. K126 carries the N6-succinyllysine modification. Substrate is bound by residues R132 and K212. 3 positions are modified to N6-acetyllysine: K224, K233, and K243. Position 252 (D252) interacts with Mn(2+). K260 contacts NADP(+). D275 and D279 together coordinate Mn(2+). Residue 310-315 (GTVTRH) participates in NADP(+) binding. N6-acetyllysine is present on K321. Residue N328 participates in NADP(+) binding. At S389 the chain carries Phosphoserine. The residue at position 400 (K400) is an N6-succinyllysine.

This sequence belongs to the isocitrate and isopropylmalate dehydrogenases family. As to quaternary structure, homodimer. It depends on Mg(2+) as a cofactor. Mn(2+) is required as a cofactor. Acetylation at Lys-374 dramatically reduces catalytic activity.

It localises to the cytoplasm. It is found in the cytosol. The catalysed reaction is D-threo-isocitrate + NADP(+) = 2-oxoglutarate + CO2 + NADPH. Functionally, catalyzes the NADP(+)-dependent oxidative decarboxylation of isocitrate (D-threo-isocitrate) to 2-ketoglutarate (2-oxoglutarate), which is required by other enzymes such as the phytanoyl-CoA dioxygenase. Plays a critical role in the generation of NADPH, an important cofactor in many biosynthesis pathways. May act as a corneal epithelial crystallin and may be involved in maintaining corneal epithelial transparency. This chain is Isocitrate dehydrogenase [NADP] cytoplasmic (IDH1), found in Microtus ochrogaster (Prairie vole).